Consider the following 382-residue polypeptide: Lipid-A-disaccharide synthase (382 aa).

This sequence belongs to the LpxB family.

The enzyme catalyses a lipid X + a UDP-2-N,3-O-bis[(3R)-3-hydroxyacyl]-alpha-D-glucosamine = a lipid A disaccharide + UDP + H(+). It participates in bacterial outer membrane biogenesis; LPS lipid A biosynthesis. Its function is as follows. Condensation of UDP-2,3-diacylglucosamine and 2,3-diacylglucosamine-1-phosphate to form lipid A disaccharide, a precursor of lipid A, a phosphorylated glycolipid that anchors the lipopolysaccharide to the outer membrane of the cell. The chain is Lipid-A-disaccharide synthase from Dechloromonas aromatica (strain RCB).